A 504-amino-acid polypeptide reads, in one-letter code: uncharacterized protein (504 aa).

A helical transmembrane segment spans residues I26–V46. Polar residues predominate over residues P103–H112. Disordered stretches follow at residues P103–M180, Y313–T402, and Q431–N504. Residues Y113–C128 are compositionally biased toward basic residues. Over residues Q135–S147 the composition is skewed to polar residues. The span at Y313–E324 shows a compositional bias: basic and acidic residues. A compositionally biased stretch (polar residues) spans S349–S377. Composition is skewed to basic and acidic residues over residues R378–D389 and L467–G478. A compositionally biased stretch (basic residues) spans S494–N504.

It localises to the membrane. This is an uncharacterized protein from Rattus norvegicus (Rat).